A 501-amino-acid chain; its full sequence is Acyl-CoA-binding domain-containing protein 5A (501 aa).

One can recognise an ACB domain in the interval 9 to 98 (YEQRFNAAVK…LKLILESMPV (90 aa)). An acyl-CoA-binding positions include 20 to 29 (IQNLPPNGSF), 40 to 44 (YSYYK), lysine 66, and tyrosine 85. A disordered region spans residues 173–405 (IDLEDREDDD…GERWGADGPM (233 aa)). Acidic residues predominate over residues 176–195 (EDREDDDDEDEEGERDEVEE). The segment covering 219-235 (SNGSISQHKGLSNGTHG) has biased composition (polar residues). 3 stretches are compositionally biased toward basic and acidic residues: residues 236–254 (SKSDLNRQESEENTEHMNH), 266–283 (NSEKDKEEDVSSSHHVAS), and 328–366 (RSQDDELLGREEGVQHGGEDGRGSRGGAQRRELPVKRSD). The segment covering 376 to 389 (SRSPASGSGSAGPQ) has biased composition (low complexity). Residues 406–437 (TENLNEQIICALARLQDDMQSVLQRLHTLEAL) are a coiled coil. A helical membrane pass occupies residues 465–485 (WWPFDVSLGTVAFAVVWPFVV).

This sequence belongs to the ATG37 family.

Its subcellular location is the membrane. In terms of biological role, acyl-CoA binding protein which acts as the peroxisome receptor for pexophagy but is dispensable for aggrephagy and nonselective autophagy. Binds medium- and long-chain acyl-CoA esters. The polypeptide is Acyl-CoA-binding domain-containing protein 5A (acbd5a) (Danio rerio (Zebrafish)).